A 602-amino-acid chain; its full sequence is MPYAGNLPTPTENKVSQIISIISAYRHRSAAVPDRFSEFAPALEKQLTETVSKGEPVRFILPSFPFKAPAEGDKRKTLGSLPDKAEEIALQTLDAFADSIAEIHQPGATVVIVSDASVYGDLLKIPDADAFAYHQELKKLAASLGLTHLEFVRPGTLAGIVPEEAKTLEEYSDHVSKTRNLLDGTLAQAVDPNEDENMRATSKHYDTALPQAEDHEAFKAAMLKRGKAYAKLIASSAESTIRLSIHESNNVGKITMNLFPPPTSPDFITPWHGAVAVLADASVRIVDASTVDRDRFEVITNHEGRPWLLREKSDLFDWFGMELDFEPLFPCGMQVRPKEGYGPYRFEDVNMKLVRRLALSTAPLLLRGFTMQVEKEVFRSKARELGEIQMWPFGDILEVRENADFNMNNVLTREAMPFHYDGVFKTVQDEKTGEWISVPPLFQMFRNRAASQSKGGLTLFASSRNLIPLLGPDSIPLEELRKLQWETFTAANEAFGGHKLQLPFIITHPESGVDTFRFHEPWPESKCVPGSSEPTLVRVVGWPLAESDALCEKLTRLLYDRRVAYRHQWKAGDFIFNDNAMTHHTRTAFEDGHREHWRVHVN.

This sequence belongs to the isocyanide synthase family.

Its function is as follows. Isocyanide synthase involved in the biosynthesis of isocyanides (or isonitriles), a class of microbial secondary metabolites. The presence of an isonitrile moiety within a compound imparts unique biological (cytotoxic, antibacterial, and antiprotozoal) and chemical (transition metal coordination) properties and enables synthetic and biochemical applications. This chain is Isocyanide synthase A, found in Aspergillus fumigatus (strain ATCC MYA-4609 / CBS 101355 / FGSC A1100 / Af293) (Neosartorya fumigata).